A 255-amino-acid chain; its full sequence is dTDP-3-amino-3,6-dideoxy-alpha-D-glucopyranose N,N-dimethyltransferase (255 aa).

Residues Tyr14, Tyr22, Tyr33, Ala58, 58–59, Glu79, 101–102, and Met117 contribute to the S-adenosyl-L-methionine site; these read AC and DM.

Belongs to the methyltransferase TylM1/DesVI family. Homodimer.

The catalysed reaction is dTDP-3-amino-3,6-dideoxy-alpha-D-glucose + 2 S-adenosyl-L-methionine = dTDP-alpha-D-mycaminose + 2 S-adenosyl-L-homocysteine + 2 H(+). It functions in the pathway antibiotic biosynthesis; tylosin biosynthesis. In terms of biological role, S-adenosyl-L-methionine-dependent methyltransferase involved in the biosynthesis of mycaminose, an essential structural component of the macrolide antibiotic tylosin. Involved in the last step in mycaminose biosynthesis by mediating dimethylation of the hexose C-3' amino group. The chain is dTDP-3-amino-3,6-dideoxy-alpha-D-glucopyranose N,N-dimethyltransferase (tylM1) from Streptomyces fradiae (Streptomyces roseoflavus).